The sequence spans 2038 residues: HEAT repeat-containing protein 5A (2038 aa).

HEAT repeat units lie at residues glutamate 850–aspartate 887 and leucine 1082–aspartate 1119. A disordered region spans residues arginine 1646–aspartate 1668. The residue at position 1647 (serine 1647) is a Phosphoserine.

This sequence belongs to the HEATR5 family.

The chain is HEAT repeat-containing protein 5A (Heatr5a) from Mus musculus (Mouse).